The chain runs to 201 residues: Recombination protein RecR (201 aa).

The C4-type zinc finger occupies 60–75 (CSRCGNVDTVDPCTVC). One can recognise a Toprim domain in the interval 83–178 (SIIIVVEDVS…KITRLAHGVP (96 aa)).

This sequence belongs to the RecR family.

In terms of biological role, may play a role in DNA repair. It seems to be involved in an RecBC-independent recombinational process of DNA repair. It may act with RecF and RecO. The chain is Recombination protein RecR from Rhizobium leguminosarum bv. trifolii (strain WSM2304).